Consider the following 107-residue polypeptide: U1-lycotoxin-Ls1d (107 aa).

An N-terminal signal peptide occupies residues 1-20; sequence MMKVLVVVALLVTLISYSSS. A propeptide spanning residues 21–41 is cleaved from the precursor; that stretch reads EGIDDLEADELLSLMANEQTR. 4 disulfide bridges follow: Cys44–Cys59, Cys51–Cys68, Cys58–Cys86, and Cys70–Cys84.

The protein belongs to the neurotoxin 19 (CSTX) family. 04 (U1-Lctx) subfamily. Expressed by the venom gland.

The protein localises to the secreted. This chain is U1-lycotoxin-Ls1d, found in Lycosa singoriensis (Wolf spider).